Reading from the N-terminus, the 368-residue chain is MNIQNDKERLLNGSIDEIEIITTDNNENDTIRNDDILKNSQLREQQQHQQIQQQIQQQKKESSLSTIASVIAFYFFISISLVFLNKILLSDFKFEYPLFITWYQQIISFVSIYIMTSISKSVPALSFLPEFEFKSATASKVLPVTAVLTGMVIFNNLCLEYVEVSFYQVARSLTICFSLILTYIVLKSKTSYRATMACLVVFLGFVLGSAGEVNFSWLGIIFGLLSSFFVALYSIAVKRVLPAVDGNEWRLSIYNTAISIGLIFPLILVSGEANTILDEPLLYSGTFWFYMTVAGLMGYLISISVFMQIKHTSPLTNTISGTVKACVQTILAVVFWGNPISTQNAVGILLVIGGSFWYSMQRFFEMKK.

A run of 9 helical transmembrane segments spans residues 64–84 (LSTI…LVFL), 98–118 (LFIT…MTSI), 141–161 (VLPV…CLEY), 166–186 (FYQV…YIVL), 195–215 (TMAC…EVNF), 217–237 (WLGI…SIAV), 251–271 (LSIY…LVSG), 287–307 (FWFY…SVFM), and 332–352 (AVVF…LLVI).

This sequence belongs to the TPT transporter family. SLC35C subfamily.

It is found in the golgi apparatus membrane. It carries out the reaction GMP(out) + GDP-beta-L-fucose(in) = GMP(in) + GDP-beta-L-fucose(out). Functionally, antiporter specific for GDP-l-fucose and depending on the concomitant reverse transport of GMP. Involved in GDP-fucose import from the cytoplasm into the Golgi lumen. The chain is GDP-fucose transporter 1 (slc35c1) from Dictyostelium discoideum (Social amoeba).